The chain runs to 434 residues: Trigger factor (434 aa).

In terms of domain architecture, PPIase FKBP-type spans 160–245 (DDKVKMNFIG…LTEVQAANLP (86 aa)).

The protein belongs to the FKBP-type PPIase family. Tig subfamily.

Its subcellular location is the cytoplasm. It carries out the reaction [protein]-peptidylproline (omega=180) = [protein]-peptidylproline (omega=0). Involved in protein export. Acts as a chaperone by maintaining the newly synthesized protein in an open conformation. Functions as a peptidyl-prolyl cis-trans isomerase. In Shewanella frigidimarina (strain NCIMB 400), this protein is Trigger factor.